The following is a 275-amino-acid chain: 3-methyl-2-oxobutanoate hydroxymethyltransferase (275 aa).

Mg(2+) is bound by residues D44 and D83. 3-methyl-2-oxobutanoate contacts are provided by residues 44 to 45 (DS), D83, and K113. E115 provides a ligand contact to Mg(2+). The Proton acceptor role is filled by E182.

It belongs to the PanB family. In terms of assembly, homodecamer; pentamer of dimers. Mg(2+) serves as cofactor.

It localises to the cytoplasm. It catalyses the reaction 3-methyl-2-oxobutanoate + (6R)-5,10-methylene-5,6,7,8-tetrahydrofolate + H2O = 2-dehydropantoate + (6S)-5,6,7,8-tetrahydrofolate. Its pathway is cofactor biosynthesis; (R)-pantothenate biosynthesis; (R)-pantoate from 3-methyl-2-oxobutanoate: step 1/2. In terms of biological role, catalyzes the reversible reaction in which hydroxymethyl group from 5,10-methylenetetrahydrofolate is transferred onto alpha-ketoisovalerate to form ketopantoate. The polypeptide is 3-methyl-2-oxobutanoate hydroxymethyltransferase (Clostridium botulinum (strain Kyoto / Type A2)).